Reading from the N-terminus, the 147-residue chain is Hemoglobin subunit delta (147 aa).

Position 2 is an N-acetylalanine; in variant Niigata (V2). One can recognise a Globin domain in the interval 3–147 (HLTPEEKTAV…VANALAHKYH (145 aa)). Phosphoserine is present on S51. 2 residues coordinate heme b: H64 and H93.

This sequence belongs to the globin family. As to quaternary structure, heterotetramer of two alpha chains and two delta chains in adult hemoglobin A2 (HbA2). HbA2 represents less than 3.5% of adult hemoglobin. As to expression, red blood cells.

In terms of biological role, involved in oxygen transport from the lung to the various peripheral tissues. The sequence is that of Hemoglobin subunit delta (HBD) from Homo sapiens (Human).